The chain runs to 167 residues: uncharacterized protein (167 aa).

Residues 5–27 (LILLTFVSFVFSKTFYYDVYVFF) traverse the membrane as a helical segment.

Its subcellular location is the membrane. This is an uncharacterized protein from Aquifex aeolicus (strain VF5).